We begin with the raw amino-acid sequence, 538 residues long: Putative outer membrane porin BglH (538 aa).

The N-terminal stretch at 1-25 (MFRRNIITSAILLMAPLAFSAQSLA) is a signal peptide.

Belongs to the porin LamB (TC 1.B.3) family.

The protein resides in the cell outer membrane. Functionally, may be a sugar porin with a broad carbohydrate specificity. The protein is Putative outer membrane porin BglH (bglH) of Escherichia coli (strain UTI89 / UPEC).